The primary structure comprises 957 residues: Glutamyl aminopeptidase (957 aa).

Residues 1–18 (MNFAEREGSKRYCIQTKH) lie on the Cytoplasmic side of the membrane. Residues 19–39 (VAILCAVVVGVGLIVGLAVGL) form a helical; Signal-anchor for type II membrane protein membrane-spanning segment. Over 40–957 (TRSCDSSGDG…EWFFNLLESG (918 aa)) the chain is Extracellular. The interval 44–83 (DSSGDGGPGTAPAPSHLPSSTASPSGPPAQDQDICPASED) is disordered. Asn-98 carries an N-linked (GlcNAc...) asparagine; atypical glycan. N-linked (GlcNAc...) asparagine glycosylation is found at Asn-124 and Asn-197. Glu-223 lines the substrate pocket. 2 N-linked (GlcNAc...) asparagine glycosylation sites follow: Asn-324 and Asn-340. Residue 357–361 (GAMEN) participates in substrate binding. Position 393 (His-393) interacts with Zn(2+). The active-site Proton acceptor is the Glu-394. Residues His-397 and Glu-416 each coordinate Zn(2+). N-linked (GlcNAc...) asparagine glycosylation is found at Asn-554, Asn-589, Asn-597, Asn-607, Asn-678, Asn-763, Asn-773, Asn-801, and Asn-828. Arg-887 contributes to the substrate binding site.

It belongs to the peptidase M1 family. As to quaternary structure, homodimer; disulfide-linked. Requires Zn(2+) as cofactor. In terms of tissue distribution, expressed in choriocarcinoma cancer cell lines (at protein level). Expressed by epithelial cells of the proximal tubule cells and the glomerulus of the nephron. Also found in a variety of other tissues.

It localises to the cell membrane. It carries out the reaction Release of N-terminal glutamate (and to a lesser extent aspartate) from a peptide.. With respect to regulation, substrate specificity is modulated by calcium which enhances the enzymatic activity for cleavage of acidic residues while reducing its activity with basic residues. Inhibited by aminopeptidase inhibitors amastatin and bestatin. In terms of biological role, regulates central hypertension through its calcium-modulated preference to cleave N-terminal acidic residues from peptides such as angiotensin II. The chain is Glutamyl aminopeptidase (ENPEP) from Homo sapiens (Human).